The sequence spans 361 residues: tRNA 2-selenouridine synthase (361 aa).

Residues 11–134 (LLADTPLIDV…LRQTAIQATW (124 aa)) form the Rhodanese domain. Cysteine 94 acts as the S-selanylcysteine intermediate in catalysis.

It belongs to the SelU family. Monomer.

The enzyme catalyses 5-methylaminomethyl-2-thiouridine(34) in tRNA + selenophosphate + (2E)-geranyl diphosphate + H2O + H(+) = 5-methylaminomethyl-2-selenouridine(34) in tRNA + (2E)-thiogeraniol + phosphate + diphosphate. The catalysed reaction is 5-methylaminomethyl-2-thiouridine(34) in tRNA + (2E)-geranyl diphosphate = 5-methylaminomethyl-S-(2E)-geranyl-thiouridine(34) in tRNA + diphosphate. It carries out the reaction 5-methylaminomethyl-S-(2E)-geranyl-thiouridine(34) in tRNA + selenophosphate + H(+) = 5-methylaminomethyl-2-(Se-phospho)selenouridine(34) in tRNA + (2E)-thiogeraniol. It catalyses the reaction 5-methylaminomethyl-2-(Se-phospho)selenouridine(34) in tRNA + H2O = 5-methylaminomethyl-2-selenouridine(34) in tRNA + phosphate. In terms of biological role, involved in the post-transcriptional modification of the uridine at the wobble position (U34) of tRNA(Lys), tRNA(Glu) and tRNA(Gln). Catalyzes the conversion of 2-thiouridine (S2U-RNA) to 2-selenouridine (Se2U-RNA). Acts in a two-step process involving geranylation of 2-thiouridine (S2U) to S-geranyl-2-thiouridine (geS2U) and subsequent selenation of the latter derivative to 2-selenouridine (Se2U) in the tRNA chain. This chain is tRNA 2-selenouridine synthase, found in Salmonella schwarzengrund (strain CVM19633).